The following is a 203-amino-acid chain: A-type ATP synthase subunit E (203 aa).

Belongs to the V-ATPase E subunit family. As to quaternary structure, has multiple subunits with at least A(3), B(3), C, D, E, F, H, I and proteolipid K(x).

The protein resides in the cell membrane. Component of the A-type ATP synthase that produces ATP from ADP in the presence of a proton gradient across the membrane. The chain is A-type ATP synthase subunit E from Methanococcus maripaludis (strain C6 / ATCC BAA-1332).